The sequence spans 305 residues: Sodium/potassium-transporting ATPase subunit beta-1 (305 aa).

Over 1–32 (MAREKSTDDGGGWKKFLWDSEKKQVLGRTGTS) the chain is Cytoplasmic. Residues 33-53 (WFKIFVFYLIFYGCLAGIFIG) traverse the membrane as a helical; Signal-anchor for type II membrane protein segment. Over 54-305 (TIQVMLLTIS…RFEVKIEVKS (252 aa)) the chain is Extracellular. Residue asparagine 114 is glycosylated (N-linked (GlcNAc...) asparagine). Residues cysteine 127 and cysteine 150 are joined by a disulfide bond. Residue asparagine 159 is glycosylated (N-linked (GlcNAc...) asparagine). A disulfide bridge links cysteine 160 with cysteine 176. N-linked (GlcNAc...) asparagine glycans are attached at residues asparagine 194 and asparagine 267. Cysteine 215 and cysteine 278 are disulfide-bonded.

Belongs to the X(+)/potassium ATPases subunit beta family. As to quaternary structure, the sodium/potassium-transporting ATPase is composed of a catalytic alpha subunit, an auxiliary non-catalytic beta subunit and an additional regulatory subunit.

It localises to the cell membrane. Its function is as follows. This is the non-catalytic component of the active enzyme, which catalyzes the hydrolysis of ATP coupled with the exchange of Na(+) and K(+) ions across the plasma membrane. The beta subunit regulates, through assembly of alpha/beta heterodimers, the number of sodium pumps transported to the plasma membrane. This is Sodium/potassium-transporting ATPase subunit beta-1 (atp1b1) from Tetronarce californica (Pacific electric ray).